The following is a 71-amino-acid chain: DNA-directed RNA polymerase subunit omega (71 aa).

This sequence belongs to the RNA polymerase subunit omega family. In terms of assembly, the RNAP catalytic core consists of 2 alpha, 1 beta, 1 beta' and 1 omega subunit. When a sigma factor is associated with the core the holoenzyme is formed, which can initiate transcription.

The catalysed reaction is RNA(n) + a ribonucleoside 5'-triphosphate = RNA(n+1) + diphosphate. Its function is as follows. Promotes RNA polymerase assembly. Latches the N- and C-terminal regions of the beta' subunit thereby facilitating its interaction with the beta and alpha subunits. The polypeptide is DNA-directed RNA polymerase subunit omega (Campylobacter curvus (strain 525.92)).